The chain runs to 391 residues: 1-deoxy-D-xylulose 5-phosphate reductoisomerase (391 aa).

Residues Thr-11, Gly-12, Ser-13, Ile-14, Gly-37, Asn-39, and Asn-125 each contribute to the NADPH site. Lys-126 lines the 1-deoxy-D-xylulose 5-phosphate pocket. Glu-127 serves as a coordination point for NADPH. Residue Asp-151 coordinates Mn(2+). Residues Ser-152, Glu-153, Ser-176, and His-199 each contribute to the 1-deoxy-D-xylulose 5-phosphate site. Residue Glu-153 participates in Mn(2+) binding. Residue Gly-205 coordinates NADPH. 1-deoxy-D-xylulose 5-phosphate-binding residues include Ser-212, Asn-217, Lys-218, and Glu-221. Residue Glu-221 participates in Mn(2+) binding.

The protein belongs to the DXR family. Mg(2+) is required as a cofactor. It depends on Mn(2+) as a cofactor.

It carries out the reaction 2-C-methyl-D-erythritol 4-phosphate + NADP(+) = 1-deoxy-D-xylulose 5-phosphate + NADPH + H(+). It functions in the pathway isoprenoid biosynthesis; isopentenyl diphosphate biosynthesis via DXP pathway; isopentenyl diphosphate from 1-deoxy-D-xylulose 5-phosphate: step 1/6. Catalyzes the NADPH-dependent rearrangement and reduction of 1-deoxy-D-xylulose-5-phosphate (DXP) to 2-C-methyl-D-erythritol 4-phosphate (MEP). In Heliobacterium modesticaldum (strain ATCC 51547 / Ice1), this protein is 1-deoxy-D-xylulose 5-phosphate reductoisomerase.